Here is a 382-residue protein sequence, read N- to C-terminus: Probable inactive dehydrogenase easA (382 aa).

FMN-binding positions include 25–27 (PMT), alanine 60, glutamine 102, and histidine 171. Residues histidine 171 and asparagine 174 each coordinate substrate. Residues lysine 223, glycine 299, 324–325 (GR), and arginine 325 each bind FMN. Tyrosine 352 contributes to the substrate binding site.

The protein belongs to the NADH:flavin oxidoreductase/NADH oxidase family.

In terms of biological role, probable inactive dehydrogenase; part of the gene cluster that mediates the biosynthesis of fungal ergot alkaloid. DmaW catalyzes the first step of ergot alkaloid biosynthesis by condensing dimethylallyl diphosphate (DMAP) and tryptophan to form 4-dimethylallyl-L-tryptophan. The second step is catalyzed by the methyltransferase easF that methylates 4-dimethylallyl-L-tryptophan in the presence of S-adenosyl-L-methionine, resulting in the formation of 4-dimethylallyl-L-abrine. The catalase easC and the FAD-dependent oxidoreductase easE then transform 4-dimethylallyl-L-abrine to chanoclavine-I which is further oxidized by easD in the presence of NAD(+), resulting in the formation of chanoclavine-I aldehyde. Agroclavine dehydrogenase easG then mediates the conversion of chanoclavine-I aldehyde to agroclavine via a non-enzymatic adduct reaction: the substrate is an iminium intermediate that is formed spontaneously from chanoclavine-I aldehyde in the presence of glutathione. Further conversion of agroclavine to paspalic acid is a two-step process involving oxidation of agroclavine to elymoclavine and of elymoclavine to paspalic acid, the second step being performed by the elymoclavine oxidase cloA. However, cloA does not encode a functional enzyme indicating that C.fusiformis terminates its ergot alkaloid pathway at elymoclavine. This Claviceps fusiformis (Ergot fungus) protein is Probable inactive dehydrogenase easA.